The sequence spans 1077 residues: ATP-dependent helicase HRQ1 (1077 aa).

Positions Ile-299 to Leu-483 constitute a Helicase ATP-binding domain. Thr-312–Ser-319 is a binding site for ATP. The short motif at Asp-423–His-426 is the DEAH box element. One can recognise a Helicase C-terminal domain in the interval Ile-521–Leu-678.

It belongs to the helicase family. HRQ1 subfamily. As to quaternary structure, forms heptamer rings. Interacts with RAD4. It depends on Mg(2+) as a cofactor.

Its subcellular location is the nucleus. The catalysed reaction is Couples ATP hydrolysis with the unwinding of duplex DNA by translocating in the 3'-5' direction.. It carries out the reaction ATP + H2O = ADP + phosphate + H(+). Functionally, helicase with 3'-5' helicase activity involved in genome stability. Functions in the RAD4-dependent nucleotide excision repair (NER) pathway and plays a critical role in DNA interstrand cross-link repair. Unwinds relatively long duplex DNA up to 120-bp and requires a long 3'-tail of at least 70 nucleotides for efficient unwinding of duplex DNA. Activity is significantly stimulated by a preexisting fork structure. Shows both processive helicase and DNA strand annealing activities. Affects telomere length by a non-catalytic mechanism, probably through inhibiting telomerase by competing with it for ssDNA binding. This is ATP-dependent helicase HRQ1 from Saccharomyces cerevisiae (strain ATCC 204508 / S288c) (Baker's yeast).